We begin with the raw amino-acid sequence, 101 residues long: NAD(P)H-quinone oxidoreductase subunit 4L, chloroplastic (101 aa).

Helical transmembrane passes span 2–22 (MFEH…YGLI), 32–52 (MCLE…SDLF), and 61–81 (IFSI…LAIV).

The protein belongs to the complex I subunit 4L family. As to quaternary structure, NDH is composed of at least 16 different subunits, 5 of which are encoded in the nucleus.

The protein resides in the plastid. It localises to the chloroplast thylakoid membrane. It catalyses the reaction a plastoquinone + NADH + (n+1) H(+)(in) = a plastoquinol + NAD(+) + n H(+)(out). It carries out the reaction a plastoquinone + NADPH + (n+1) H(+)(in) = a plastoquinol + NADP(+) + n H(+)(out). In terms of biological role, NDH shuttles electrons from NAD(P)H:plastoquinone, via FMN and iron-sulfur (Fe-S) centers, to quinones in the photosynthetic chain and possibly in a chloroplast respiratory chain. The immediate electron acceptor for the enzyme in this species is believed to be plastoquinone. Couples the redox reaction to proton translocation, and thus conserves the redox energy in a proton gradient. The polypeptide is NAD(P)H-quinone oxidoreductase subunit 4L, chloroplastic (Lemna minor (Common duckweed)).